The sequence spans 172 residues: Myosin regulatory light polypeptide 9 (172 aa).

The segment covering 1–16 (MSSKRAKAKTTKKRPQ) has biased composition (basic residues). Residues 1–20 (MSSKRAKAKTTKKRPQRATS) are disordered. Position 2 is an N-acetylserine (serine 2). Residue threonine 19 is modified to Phosphothreonine; by MLCK, CIT and ROCK2. Serine 20 is subject to Phosphoserine; by CDC42BP, CIT, MLCK, PAK1, ROCK1, ROCK2, DAPK1, DAPK2 and ZIPK/DAPK3. 3 EF-hand domains span residues 29 to 64 (SQIQ…LGKN), 98 to 133 (DPED…MGDR), and 134 to 169 (FTDE…GAKD). The Ca(2+) site is built by aspartate 42, asparagine 44, aspartate 46, and aspartate 53.

In terms of assembly, myosin is a hexamer of 2 heavy chains and 4 light chains: interacts with myosin heavy chain MYO19. Interacts with LUZP1; the interaction results in inhibition of phosphorylation of MYL9 by DAPK3. Post-translationally, phosphorylation increases the actin-activated myosin ATPase activity and thereby regulates the contractile activity. It is required to generate the driving force in the migration of the cells but not necessary for localization of myosin-2 at the leading edge. Phosphorylation is required for myotube formation. Phosphorylated by DAPK3; DAPK3-mediated phosphorylation is inhibited by LUZP1.

The protein localises to the cytoplasm. Its subcellular location is the cytoskeleton. It is found in the cell cortex. Its function is as follows. Myosin regulatory subunit that plays an important role in regulation of both smooth muscle and nonmuscle cell contractile activity via its phosphorylation. Implicated in cytokinesis, receptor capping, and cell locomotion. In myoblasts, regulates PIEZO1-dependent cortical actomyosin assembly involved in myotube formation. In Mus musculus (Mouse), this protein is Myosin regulatory light polypeptide 9 (Myl9).